Consider the following 342-residue polypeptide: tRNA N6-adenosine threonylcarbamoyltransferase (342 aa).

The Fe cation site is built by His115 and His119. Residues 137 to 141, Asp170, Gly183, Asp187, and Asn276 contribute to the substrate site; that span reads IVSGG. Asp304 lines the Fe cation pocket.

This sequence belongs to the KAE1 / TsaD family. Requires Fe(2+) as cofactor.

It localises to the cytoplasm. The catalysed reaction is L-threonylcarbamoyladenylate + adenosine(37) in tRNA = N(6)-L-threonylcarbamoyladenosine(37) in tRNA + AMP + H(+). Its function is as follows. Required for the formation of a threonylcarbamoyl group on adenosine at position 37 (t(6)A37) in tRNAs that read codons beginning with adenine. Is involved in the transfer of the threonylcarbamoyl moiety of threonylcarbamoyl-AMP (TC-AMP) to the N6 group of A37, together with TsaE and TsaB. TsaD likely plays a direct catalytic role in this reaction. In Staphylococcus haemolyticus (strain JCSC1435), this protein is tRNA N6-adenosine threonylcarbamoyltransferase.